A 66-amino-acid polypeptide reads, in one-letter code: Sodium channel neurotoxin MeuNaTxalpha-7 (66 aa).

In terms of domain architecture, LCN-type CS-alpha/beta spans 2-64; that stretch reads RDGYIADDKN…VPIKVSGKCN (63 aa). Disulfide bonds link Cys12-Cys63, Cys16-Cys36, Cys22-Cys46, and Cys26-Cys48. Asn64 bears the Asparagine amide mark.

The protein belongs to the long (4 C-C) scorpion toxin superfamily. Sodium channel inhibitor family. Alpha subfamily. As to expression, expressed by the venom gland.

It is found in the secreted. Its function is as follows. Alpha toxins bind voltage-independently at site-3 of sodium channels (Nav) and inhibit the inactivation of the activated channels, thereby blocking neuronal transmission. The chain is Sodium channel neurotoxin MeuNaTxalpha-7 from Mesobuthus eupeus (Lesser Asian scorpion).